The chain runs to 331 residues: UDP-N-acetylenolpyruvoylglucosamine reductase (331 aa).

One can recognise an FAD-binding PCMH-type domain in the interval 54-221 (RVGGAAELYV…TQATFQLQPG (168 aa)). R200 is an active-site residue. Residue S251 is the Proton donor of the active site. Residue E321 is part of the active site.

Belongs to the MurB family. The cofactor is FAD.

The protein resides in the cytoplasm. It catalyses the reaction UDP-N-acetyl-alpha-D-muramate + NADP(+) = UDP-N-acetyl-3-O-(1-carboxyvinyl)-alpha-D-glucosamine + NADPH + H(+). It functions in the pathway cell wall biogenesis; peptidoglycan biosynthesis. Cell wall formation. The protein is UDP-N-acetylenolpyruvoylglucosamine reductase of Nostoc sp. (strain PCC 7120 / SAG 25.82 / UTEX 2576).